Reading from the N-terminus, the 304-residue chain is ULP1-interacting protein 4 (304 aa).

The tract at residues 72–269 (DEYPKEVDEH…SIVKEGDANT (198 aa)) is disordered. Residues 73 to 83 (EYPKEVDEHSN) are compositionally biased toward basic and acidic residues. Residues 129-149 (TPSLKGNVTFPSPKTAISQDG) are compositionally biased toward polar residues. Ser140 carries the phosphoserine modification. A compositionally biased stretch (basic and acidic residues) spans 155–183 (ETTRKERKYEHAPLNEVPVERDPKEENKE). Residues Ser185 and Ser205 each carry the phosphoserine modification.

As to quaternary structure, interacts with ULP1.

It is found in the endoplasmic reticulum membrane. The protein localises to the mitochondrion outer membrane. The protein resides in the nucleus envelope. This Saccharomyces cerevisiae (strain ATCC 204508 / S288c) (Baker's yeast) protein is ULP1-interacting protein 4 (UIP4).